Consider the following 323-residue polypeptide: uncharacterized protein (323 aa).

This is an uncharacterized protein from Thermotoga maritima (strain ATCC 43589 / DSM 3109 / JCM 10099 / NBRC 100826 / MSB8).